A 308-amino-acid chain; its full sequence is Methionyl-tRNA formyltransferase (308 aa).

(6S)-5,6,7,8-tetrahydrofolate is bound at residue 109-112 (SLLP).

This sequence belongs to the Fmt family.

The catalysed reaction is L-methionyl-tRNA(fMet) + (6R)-10-formyltetrahydrofolate = N-formyl-L-methionyl-tRNA(fMet) + (6S)-5,6,7,8-tetrahydrofolate + H(+). Attaches a formyl group to the free amino group of methionyl-tRNA(fMet). The formyl group appears to play a dual role in the initiator identity of N-formylmethionyl-tRNA by promoting its recognition by IF2 and preventing the misappropriation of this tRNA by the elongation apparatus. The chain is Methionyl-tRNA formyltransferase from Rhizorhabdus wittichii (strain DSM 6014 / CCUG 31198 / JCM 15750 / NBRC 105917 / EY 4224 / RW1) (Sphingomonas wittichii).